We begin with the raw amino-acid sequence, 369 residues long: Dual-specificity RNA methyltransferase RlmN (369 aa).

E94 serves as the catalytic Proton acceptor. The 234-residue stretch at 113–346 (ESEKWTMCLS…CTIRESRGID (234 aa)) folds into the Radical SAM core domain. C120 and C351 are joined by a disulfide. [4Fe-4S] cluster is bound by residues C127, C131, and C134. S-adenosyl-L-methionine is bound by residues 177–178 (GE), S209, 232–234 (SLH), and N308. Residue C351 is the S-methylcysteine intermediate of the active site.

It belongs to the radical SAM superfamily. RlmN family. The cofactor is [4Fe-4S] cluster.

It is found in the cytoplasm. The enzyme catalyses adenosine(2503) in 23S rRNA + 2 reduced [2Fe-2S]-[ferredoxin] + 2 S-adenosyl-L-methionine = 2-methyladenosine(2503) in 23S rRNA + 5'-deoxyadenosine + L-methionine + 2 oxidized [2Fe-2S]-[ferredoxin] + S-adenosyl-L-homocysteine. It catalyses the reaction adenosine(37) in tRNA + 2 reduced [2Fe-2S]-[ferredoxin] + 2 S-adenosyl-L-methionine = 2-methyladenosine(37) in tRNA + 5'-deoxyadenosine + L-methionine + 2 oxidized [2Fe-2S]-[ferredoxin] + S-adenosyl-L-homocysteine. In terms of biological role, specifically methylates position 2 of adenine 2503 in 23S rRNA and position 2 of adenine 37 in tRNAs. m2A2503 modification seems to play a crucial role in the proofreading step occurring at the peptidyl transferase center and thus would serve to optimize ribosomal fidelity. This chain is Dual-specificity RNA methyltransferase RlmN, found in Helicobacter hepaticus (strain ATCC 51449 / 3B1).